We begin with the raw amino-acid sequence, 200 residues long: Cysteine-rich venom protein VAR8 (200 aa).

The signal sequence occupies residues 1–22 (MILLKLYLTLAAILCQSRGTTS). In terms of domain architecture, SCP spans 41–169 (NKHNDLRRTV…PLKYFLVCQY (129 aa)). 4 disulfide bridges follow: cysteine 77/cysteine 156, cysteine 95/cysteine 170, cysteine 151/cysteine 167, and cysteine 189/cysteine 196.

This sequence belongs to the CRISP family. Contains 8 disulfide bonds. As to expression, expressed by the venom gland.

The protein resides in the secreted. Functionally, blocks ryanodine receptors, and potassium channels. The chain is Cysteine-rich venom protein VAR8 from Varanus acanthurus (Ridge-tailed monitor).